The sequence spans 339 residues: MNIQQAIKQIVKKQDLSQNEMQKVMNDIMTGKTTDTQTSGFLVGLAIKGESIDEITAVVKIIRSFTKSVTIKNTKHLVDTCGTGGDGLGLFNISTACAFVVAAAGGSVAKHGNRGISSKSGSADVLKAAGVNLNMSVERISKCIEKIGIGFMFAPFHHHSIKYTTNVRKDLAIKTIFNIVGPLTNPAKVPNQIIGVYTQNLVEPIAHVLKKLGSKHIIVVHSKDGLDEISIADDTFVAELKNGKIKTYTINPTNFGLPLGNLDDIKVNNADDSLILIQQALDGKDSVAKNIVALNSGAAIYVCELANSLQEGVSKALKILNSGVAHQKLDDFVRESTGC.

Residues Gly-82, 85-86 (GD), 92-95 (NIST), 110-118 (KHGNRGISS), and Ser-122 contribute to the 5-phospho-alpha-D-ribose 1-diphosphate site. Gly-82 is a binding site for anthranilate. Ser-94 provides a ligand contact to Mg(2+). Residue Asn-113 coordinates anthranilate. Anthranilate is bound at residue Arg-168. Mg(2+) contacts are provided by Asp-227 and Glu-228.

The protein belongs to the anthranilate phosphoribosyltransferase family. As to quaternary structure, homodimer. The cofactor is Mg(2+).

The catalysed reaction is N-(5-phospho-beta-D-ribosyl)anthranilate + diphosphate = 5-phospho-alpha-D-ribose 1-diphosphate + anthranilate. It functions in the pathway amino-acid biosynthesis; L-tryptophan biosynthesis; L-tryptophan from chorismate: step 2/5. In terms of biological role, catalyzes the transfer of the phosphoribosyl group of 5-phosphorylribose-1-pyrophosphate (PRPP) to anthranilate to yield N-(5'-phosphoribosyl)-anthranilate (PRA). The polypeptide is Anthranilate phosphoribosyltransferase (Vesicomyosocius okutanii subsp. Calyptogena okutanii (strain HA)).